The following is a 463-amino-acid chain: Fumarate hydratase class II (463 aa).

Substrate is bound by residues 95–97, 126–129, 136–138, and Thr184; these read SGT, HPND, and SSN. Residue His185 is the Proton donor/acceptor of the active site. The active site involves Ser315. Substrate is bound by residues Ser316 and 321–323; that span reads KIN.

The protein belongs to the class-II fumarase/aspartase family. Fumarase subfamily. In terms of assembly, homotetramer.

It is found in the cytoplasm. It catalyses the reaction (S)-malate = fumarate + H2O. The protein operates within carbohydrate metabolism; tricarboxylic acid cycle; (S)-malate from fumarate: step 1/1. Involved in the TCA cycle. Catalyzes the stereospecific interconversion of fumarate to L-malate. In Chlamydia trachomatis serovar D (strain ATCC VR-885 / DSM 19411 / UW-3/Cx), this protein is Fumarate hydratase class II.